Here is a 312-residue protein sequence, read N- to C-terminus: Ribosomal protein L11 methyltransferase (312 aa).

Thr-163, Gly-184, Asp-206, and Asn-248 together coordinate S-adenosyl-L-methionine.

Belongs to the methyltransferase superfamily. PrmA family.

It is found in the cytoplasm. It catalyses the reaction L-lysyl-[protein] + 3 S-adenosyl-L-methionine = N(6),N(6),N(6)-trimethyl-L-lysyl-[protein] + 3 S-adenosyl-L-homocysteine + 3 H(+). Its function is as follows. Methylates ribosomal protein L11. The sequence is that of Ribosomal protein L11 methyltransferase from Clostridium botulinum (strain 657 / Type Ba4).